The primary structure comprises 366 residues: Anhydro-N-acetylmuramic acid kinase (366 aa).

Residue 10–17 (GTSMDGID) coordinates ATP.

The protein belongs to the anhydro-N-acetylmuramic acid kinase family.

It carries out the reaction 1,6-anhydro-N-acetyl-beta-muramate + ATP + H2O = N-acetyl-D-muramate 6-phosphate + ADP + H(+). It functions in the pathway amino-sugar metabolism; 1,6-anhydro-N-acetylmuramate degradation. Its pathway is cell wall biogenesis; peptidoglycan recycling. Catalyzes the specific phosphorylation of 1,6-anhydro-N-acetylmuramic acid (anhMurNAc) with the simultaneous cleavage of the 1,6-anhydro ring, generating MurNAc-6-P. Is required for the utilization of anhMurNAc either imported from the medium or derived from its own cell wall murein, and thus plays a role in cell wall recycling. The protein is Anhydro-N-acetylmuramic acid kinase of Legionella pneumophila (strain Paris).